A 987-amino-acid polypeptide reads, in one-letter code: ATP-dependent 6-phosphofructokinase subunit alpha (987 aa).

Residues M1–V580 form an N-terminal catalytic PFK domain 1 region. A Phosphoserine modification is found at S3. K89 is covalently cross-linked (Glycyl lysine isopeptide (Lys-Gly) (interchain with G-Cter in ubiquitin)). Phosphoserine occurs at positions 166, 179, 185, 189, and 192. G215 is a binding site for ATP. Position 217 is a phosphoserine (S217). ATP-binding positions include R278–S279 and G308–S311. Position 309 (D309) interacts with Mg(2+). Beta-D-fructose 6-phosphate-binding positions include S354–D356, R391, and M398–R400. D356 acts as the Proton acceptor in catalysis. At T450 the chain carries Phosphothreonine. Beta-D-fructose 6-phosphate contacts are provided by residues E455, K482, and H488–R491. The tract at residues K581–L594 is interdomain linker. The tract at residues N595–K987 is C-terminal regulatory PFK domain 2. K625 participates in a covalent cross-link: Glycyl lysine isopeptide (Lys-Gly) (interchain with G-Cter in ubiquitin). Residues R665, T722–N726, R760, Q767–G769, E827, R853, H859–Q862, and R952 each bind beta-D-fructose 2,6-bisphosphate.

This sequence belongs to the phosphofructokinase type A (PFKA) family. ATP-dependent PFK group I subfamily. Eukaryotic two domain clade 'E' sub-subfamily. Heterooctamer of 4 alpha and 4 beta chains. The cofactor is Mg(2+).

The protein localises to the cytoplasm. It is found in the mitochondrion outer membrane. The enzyme catalyses beta-D-fructose 6-phosphate + ATP = beta-D-fructose 1,6-bisphosphate + ADP + H(+). It participates in carbohydrate degradation; glycolysis; D-glyceraldehyde 3-phosphate and glycerone phosphate from D-glucose: step 3/4. Its activity is regulated as follows. Allosterically activated by ADP, AMP, or fructose 2,6-bisphosphate, and allosterically inhibited by ATP or citrate. In terms of biological role, catalyzes the phosphorylation of D-fructose 6-phosphate to fructose 1,6-bisphosphate by ATP, the first committing step of glycolysis. The sequence is that of ATP-dependent 6-phosphofructokinase subunit alpha (PFK1) from Saccharomyces cerevisiae (strain ATCC 204508 / S288c) (Baker's yeast).